Consider the following 277-residue polypeptide: R-spondin-3 (277 aa).

The N-terminal stretch at 1–21 (MHLRLISCFFIILNFMEYIGS) is a signal peptide. FU repeat units lie at residues 35–86 (PNVS…GYYG) and 92–135 (INKC…GLEA). N-linked (GlcNAc...) asparagine glycosylation is present at asparagine 36. Cystine bridges form between cysteine 41–cysteine 48, cysteine 45–cysteine 54, cysteine 57–cysteine 76, cysteine 80–cysteine 95, cysteine 98–cysteine 105, cysteine 102–cysteine 111, cysteine 114–cysteine 125, cysteine 129–cysteine 142, cysteine 148–cysteine 190, cysteine 159–cysteine 166, and cysteine 199–cysteine 206. The 61-residue stretch at 147–207 (HCEASEWSPW…TCIVQRKKCS (61 aa)) folds into the TSP type-1 domain. Residues 210 to 277 (ERGKKGRERK…QKSVSVSTVH (68 aa)) form a disordered region. Residues 213–223 (KKGRERKRKKL) are compositionally biased toward basic residues. Positions 232–245 (SSSSDSKGLESSIE) are enriched in low complexity.

The protein belongs to the R-spondin family. Interacts with the extracellular domain of FZD8 and LRP6. It however does not form a ternary complex with FZD8 and LRP6. Interacts with WNT1. Binds heparin. Interacts with LGR4, LGR5 and LGR6. As to expression, highly expressed in endothelial cells.

It localises to the secreted. Its function is as follows. Activator of the canonical Wnt signaling pathway by acting as a ligand for LGR4-6 receptors, which acts as a key regulator of angiogenesis. Upon binding to LGR4-6 (LGR4, LGR5 or LGR6), LGR4-6 associate with phosphorylated LRP6 and frizzled receptors that are activated by extracellular Wnt receptors, triggering the canonical Wnt signaling pathway to increase expression of target genes. Also regulates the canonical Wnt/beta-catenin-dependent pathway and non-canonical Wnt signaling by acting as an inhibitor of ZNRF3, an important regulator of the Wnt signaling pathway. Acts as a ligand for frizzled FZD8 and LRP6. May negatively regulate the TGF-beta pathway. Acts as a key regulator of angiogenesis by controlling vascular stability and pruning: acts by activating the non-canonical Wnt signaling pathway in endothelial cells. Can also amplify Wnt signaling pathway independently of LGR4-6 receptors, possibly by acting as a direct antagonistic ligand to RNF43 and ZNRF3. The sequence is that of R-spondin-3 (Rspo3) from Mus musculus (Mouse).